Here is a 629-residue protein sequence, read N- to C-terminus: MPIRILSPQLANQIAAGEVVERPASVVKELVENSLDAGANKIQIDIENGGANLIRIRDNGCGIPKEELSLALARHATSKIADLDDLEAILSLGFRGEALASISSVSRLTLTSRTEEQTEAWQVYAQGRDMETTIKPASHPVGTTVEVANLFFNTPARRKFLRTDKTEFAHIDEVIRRIALTKFNTAFTLTHNGKIVRQYRPAFDLNQQLKRVAVICGDDFVKNALRIDWKHDDLHLSGWVATPNFSRTQNDLSYCYINGRMVRDKVISHAIRQAYAQYLPTDAYPAFVLFIDLNPHDVDVNVHPTKHEVRFHQQRLIHDFIYEGISYALNNQEQLNWHTEQSAVENHEENTVREPQPNYSIRPNRAAAGQNSFAPQYHEKPQQNQPHFSNTPVLPNHVSTGYRDYRSDAPSKTEQRLYAELLRTLPPTAQKDISNTAQQNISDTAKIISTEIIECSSHLRALSLIENRALLLQQNQDFFLLSLEKLQRLQWQLALQQIQIEQQPLLIPIVFRLTEAQFQAWQQYSDNFKKIGFEFIENQAQLRLTLNKVPNVLRTQNLQKCVMAMLTRDENSSPFLTALCAQLECKTFDALADALNLLSETERLLTQTNRTAFTQLLKPVNWQPLLDEI.

The disordered stretch occupies residues 376 to 396 (QYHEKPQQNQPHFSNTPVLPN). Residues 382-396 (QQNQPHFSNTPVLPN) show a composition bias toward polar residues.

It belongs to the DNA mismatch repair MutL/HexB family.

In terms of biological role, this protein is involved in the repair of mismatches in DNA. It is required for dam-dependent methyl-directed DNA mismatch repair. May act as a 'molecular matchmaker', a protein that promotes the formation of a stable complex between two or more DNA-binding proteins in an ATP-dependent manner without itself being part of a final effector complex. The protein is DNA mismatch repair protein MutL of Haemophilus influenzae (strain PittEE).